The chain runs to 311 residues: MTQPRHFIDLWKLDGATLRLLLDDAHARKAARKGWPQGKVDADAPAKDRVLSMIFQKNSTRTRFSFDAAMRQLGGSAIISTASDMQLGRGETIEDTAKVLSRMVDAVMIRANSHADVERFAQVSTVPIINGLTDKSHPCQIMADILTIEEHRGPIAGKTIAWVGDGNNVCSSFIHAAPLLGFELKIACPAVYHADLHDLARAEGLQGKVSMTTDPKAAVSGADVVVADTWVSMGDTDHDERLAALEPYQVDDRLMDLAAGNGVFLHCLPAHRGEEVTDAVLDGPRSLVWDEAENRIHAQKSVLAWCFGAIG.

Carbamoyl phosphate-binding positions include 59–62, Gln-86, Arg-110, and 137–140; these read STRT and HPCQ. L-ornithine contacts are provided by residues Asn-168, Asp-228, and 232–233; that span reads SM. Residues 267-268 and Arg-295 each bind carbamoyl phosphate; that span reads CL.

The protein belongs to the aspartate/ornithine carbamoyltransferase superfamily. OTCase family.

Its subcellular location is the cytoplasm. The catalysed reaction is carbamoyl phosphate + L-ornithine = L-citrulline + phosphate + H(+). It functions in the pathway amino-acid biosynthesis; L-arginine biosynthesis; L-arginine from L-ornithine and carbamoyl phosphate: step 1/3. Functionally, reversibly catalyzes the transfer of the carbamoyl group from carbamoyl phosphate (CP) to the N(epsilon) atom of ornithine (ORN) to produce L-citrulline. The polypeptide is Ornithine carbamoyltransferase (Caulobacter vibrioides (strain ATCC 19089 / CIP 103742 / CB 15) (Caulobacter crescentus)).